A 201-amino-acid polypeptide reads, in one-letter code: Ribosome maturation factor RimP (201 aa).

The protein belongs to the RimP family.

Its subcellular location is the cytoplasm. In terms of biological role, required for maturation of 30S ribosomal subunits. This Acidiphilium cryptum (strain JF-5) protein is Ribosome maturation factor RimP.